The following is an 845-amino-acid chain: Protein kintoun (845 aa).

A compositionally biased stretch (basic and acidic residues) spans 362-382 (SKEQAQMHETLRHFSREDSGV). Disordered stretches follow at residues 362-420 (SKEQ…PVRH), 575-691 (QALK…SMSD), and 773-845 (AQHR…EMDD). The residue at position 380 (Ser-380) is a Phosphoserine. Residues 391–400 (PVEEDPDGEL) show a composition bias toward acidic residues. Over residues 584–593 (GTKEEEKENQ) the composition is skewed to basic and acidic residues. The span at 611–622 (KPGKKQRKRNKK) shows a compositional bias: basic residues. Polar residues predominate over residues 640–671 (LTKNSELQPKSTFNLPQRKQRSYSECNDSTGG). At Ser-779 the chain carries Phosphoserine. Polar residues predominate over residues 794-804 (LKQQENQSRNC).

The protein belongs to the PIH1 family. Kintoun subfamily. Interacts with Pp1alpha-96A, Pp1-87B, Pp1-13C and flw.

The protein localises to the cytoplasm. Its function is as follows. Required for cytoplasmic pre-assembly of axonemal dyneins, thereby playing a central role in motility in cilia and flagella. Involved in pre-assembly of dynein arm complexes in the cytoplasm before intraflagellar transport loads them for the ciliary compartment. This is Protein kintoun from Drosophila erecta (Fruit fly).